Reading from the N-terminus, the 462-residue chain is Glutamate--tRNA ligase (462 aa).

The short motif at 11 to 21 is the 'HIGH' region element; it reads PSPTGFIHLGN. The 'KMSKS' region motif lies at 243–247; it reads KMSKR. Lys246 provides a ligand contact to ATP.

This sequence belongs to the class-I aminoacyl-tRNA synthetase family. Glutamate--tRNA ligase type 1 subfamily. As to quaternary structure, monomer.

It is found in the cytoplasm. The enzyme catalyses tRNA(Glu) + L-glutamate + ATP = L-glutamyl-tRNA(Glu) + AMP + diphosphate. Functionally, catalyzes the attachment of glutamate to tRNA(Glu) in a two-step reaction: glutamate is first activated by ATP to form Glu-AMP and then transferred to the acceptor end of tRNA(Glu). The sequence is that of Glutamate--tRNA ligase from Albidiferax ferrireducens (strain ATCC BAA-621 / DSM 15236 / T118) (Rhodoferax ferrireducens).